Here is a 456-residue protein sequence, read N- to C-terminus: NADH oxidase (456 aa).

Residue N10 coordinates FAD. H11 (proton acceptor) is an active-site residue. FAD-binding residues include A12, D34, Q35, C44, V81, A110, S113, K143, and Y170. The active-site Redox-active is the C44. C44 is subject to Cysteine sulfinic acid (-SO2H). NAD(+) is bound by residues I171, D190, Y199, and G254. D292 serves as a coordination point for FAD. A308 is a binding site for NAD(+). FAD contacts are provided by L309, A310, and S311. G339 contributes to the NAD(+) binding site. F436 provides a ligand contact to FAD.

Requires FAD as cofactor.

It carries out the reaction 2 NADH + O2 + 2 H(+) = 2 NAD(+) + 2 H2O. Catalyzes the four-electron reduction of molecular oxygen to water. The protein is NADH oxidase of Streptococcus pyogenes serotype M6 (strain ATCC BAA-946 / MGAS10394).